The chain runs to 664 residues: Type IV inositol polyphosphate 5-phosphatase 3 (664 aa).

Residues 35 to 76 (GRDPEYGADTDNESENEDAREDNDDSSSDEEGGSGSRGRESK) are disordered. A compositionally biased stretch (acidic residues) spans 40–66 (YGADTDNESENEDAREDNDDSSSDEEG). 2 catalytic regions span residues 514–529 (ERII…LSSS) and 592–607 (PKRT…SYGK).

It belongs to the inositol polyphosphate 5-phosphatase family.

The enzyme catalyses a 1,2-diacyl-sn-glycero-3-phospho-(1D-myo-inositol-4,5-bisphosphate) + H2O = a 1,2-diacyl-sn-glycero-3-phospho-(1D-myo-inositol 4-phosphate) + phosphate. The catalysed reaction is a 1,2-diacyl-sn-glycero-3-phospho-(1D-myo-inositol-3,4,5-trisphosphate) + H2O = a 1,2-diacyl-sn-glycero-3-phospho-(1D-myo-inositol-3,4-bisphosphate) + phosphate. In terms of biological role, has phosphatase activity toward PtdIns(4,5)P2 and PtdIns(3,4,5)P3. The protein is Type IV inositol polyphosphate 5-phosphatase 3 of Arabidopsis thaliana (Mouse-ear cress).